A 269-amino-acid polypeptide reads, in one-letter code: tRNA pseudouridine synthase A (269 aa).

Asp-51 serves as the catalytic Nucleophile. Tyr-109 provides a ligand contact to substrate.

This sequence belongs to the tRNA pseudouridine synthase TruA family. Homodimer.

It carries out the reaction uridine(38/39/40) in tRNA = pseudouridine(38/39/40) in tRNA. Its function is as follows. Formation of pseudouridine at positions 38, 39 and 40 in the anticodon stem and loop of transfer RNAs. This chain is tRNA pseudouridine synthase A, found in Haemophilus influenzae (strain 86-028NP).